The sequence spans 326 residues: Probable cell division protein WhiA (326 aa).

The segment at residues Ser-275–Ser-308 is a DNA-binding region (H-T-H motif).

The protein belongs to the WhiA family.

Its function is as follows. Involved in cell division and chromosome segregation. In Renibacterium salmoninarum (strain ATCC 33209 / DSM 20767 / JCM 11484 / NBRC 15589 / NCIMB 2235), this protein is Probable cell division protein WhiA.